A 678-amino-acid polypeptide reads, in one-letter code: MTKNLLVELGLEEIPAYIVTPAMHQLRDRMATFLTDNRLAFDSIDVFSTPRRLAVRVRGLADQQTDLTEDFKGPAKKIALDADGNFTKAAEGFVRGKGLTTADIEFREIKGEEYVYVTKHEAGQPAKTVLAGIPEVLKAMTFPVSMNWASNKFAYIRPVHTLTVLLDDEALDMDFLDITSGRISRGHRFLGNETEIASADSYEADLRAQFVITDPAERQNMIVEQIKAIEDKHNVTVEIDEDLLNEVLNLVEYPTAFMGSFDTKYLEVPEEVLVTSMKNHQRYFVVRDKAGKLLPNFISVRNGNDQYLDNVIKGNEKVLVARLEDGEFFWREDQKLKIADLVERLKVVTFHEKIGSLYEHMERTKVIAEKLADLAGLSAGEKADVARAADIYKFDLLTGMVGEFDELQGIMGEKYALLAGEKPAVAAAIREHYLPNSAEGELPESKVGAVLALADKFDTLLSFFSVGLIPSGSNDPYALRRATQGIVRILEAFGWEIPLDQLIAELYSLNFASLTYDNQPAVMDFIRARVEKMMDKTIPKDIREAVLASSTFVVRLQLAASSAIFQKAKEADYKEAVENLSRVFNLAEKAEVTAIDEALFENDQEKALAAAVAGLELTEDMAGNLDKLFALSPVIAAFFDNTMVMVDDATVKANRLALLKALADKASAVAVFNLLNSK.

Belongs to the class-II aminoacyl-tRNA synthetase family. Tetramer of two alpha and two beta subunits.

It is found in the cytoplasm. The catalysed reaction is tRNA(Gly) + glycine + ATP = glycyl-tRNA(Gly) + AMP + diphosphate. The polypeptide is Glycine--tRNA ligase beta subunit (Streptococcus suis (strain 98HAH33)).